The chain runs to 547 residues: Chaperonin GroEL 1 (547 aa).

ATP-binding positions include 30-33 (TLGP), K51, 87-91 (DGTTT), G415, and D496.

Belongs to the chaperonin (HSP60) family. Forms a cylinder of 14 subunits composed of two heptameric rings stacked back-to-back. Interacts with the co-chaperonin GroES.

Its subcellular location is the cytoplasm. It catalyses the reaction ATP + H2O + a folded polypeptide = ADP + phosphate + an unfolded polypeptide.. In terms of biological role, together with its co-chaperonin GroES, plays an essential role in assisting protein folding. The GroEL-GroES system forms a nano-cage that allows encapsulation of the non-native substrate proteins and provides a physical environment optimized to promote and accelerate protein folding. In Rhodopseudomonas palustris (strain BisB18), this protein is Chaperonin GroEL 1.